Consider the following 342-residue polypeptide: Anthranilate phosphoribosyltransferase (342 aa).

Residues glycine 84, 87-88, threonine 92, 94-97, 112-120, and serine 124 each bind 5-phospho-alpha-D-ribose 1-diphosphate; these read GD, NIST, and KHGNRGVSS. Position 84 (glycine 84) interacts with anthranilate. Serine 96 contributes to the Mg(2+) binding site. Asparagine 115 contacts anthranilate. Position 170 (arginine 170) interacts with anthranilate. Residues aspartate 229 and glutamate 230 each coordinate Mg(2+).

It belongs to the anthranilate phosphoribosyltransferase family. In terms of assembly, homodimer. Mg(2+) serves as cofactor.

It catalyses the reaction N-(5-phospho-beta-D-ribosyl)anthranilate + diphosphate = 5-phospho-alpha-D-ribose 1-diphosphate + anthranilate. It participates in amino-acid biosynthesis; L-tryptophan biosynthesis; L-tryptophan from chorismate: step 2/5. Its function is as follows. Catalyzes the transfer of the phosphoribosyl group of 5-phosphorylribose-1-pyrophosphate (PRPP) to anthranilate to yield N-(5'-phosphoribosyl)-anthranilate (PRA). The sequence is that of Anthranilate phosphoribosyltransferase from Cupriavidus metallidurans (strain ATCC 43123 / DSM 2839 / NBRC 102507 / CH34) (Ralstonia metallidurans).